Consider the following 579-residue polypeptide: MLRTHTCGELRATDEGKKVKLCGWVDRIRDLGGVRFIDLRDRYGETQIVCDVNSEAYSVVDELTRESVVLVEGTVRKRPEGTENPNIETGEIEVVAERIEILSLADPLPFYPGETPKEEMRLKYRYIDLRSERMKRNIILRYRISKIIRDYFDELGFLEIETPFLTRSTPEGARDFLVPSRLRPGKFYALPQSPQLFKQILMISGFDRYFQIVRCFRDEDLRADRQPEFTQVDVEMSFVDVEDVLNVSEGMVSRVFKESSGIDLKVPFDRIPYDDAMEKYGTDKPDRRYGMELRDFGYAFETTEFKVIRNVLNEGGSVKGFIVPGFASEMSRKKGEELMARMKELGLGGLIWFKLDGGITSPHLKHLEKEFRKIAETENMNEGDVCLIAAHTDRNLLNEALGTLRLEIGKEHFSHLAKGFDVLWVVDFPYFEWSEEEERFVARHHPFTMPVLETLGDDYTKVRAKAYDLVINGYEVGGGSIRIHRRDIQEKIFELLGLSEEEAQKKFGFFLEAFRYGVPPHGGIAFGLDRLVSIIAGESSIREVIAFPKTGNGVCLLTGAPAEVDERQLRELRIRIEEG.

Glu171 provides a ligand contact to L-aspartate. The tract at residues Gln195–Lys198 is aspartate. Arg217 contacts L-aspartate. Residues Arg217 to Glu219 and Gln226 contribute to the ATP site. Position 444 (His444) interacts with L-aspartate. Glu475 contributes to the ATP binding site. Arg482 serves as a coordination point for L-aspartate. Gly527–Arg530 is a binding site for ATP.

Belongs to the class-II aminoacyl-tRNA synthetase family. Type 1 subfamily. Homodimer.

It is found in the cytoplasm. It carries out the reaction tRNA(Asx) + L-aspartate + ATP = L-aspartyl-tRNA(Asx) + AMP + diphosphate. Its function is as follows. Aspartyl-tRNA synthetase with relaxed tRNA specificity since it is able to aspartylate not only its cognate tRNA(Asp) but also tRNA(Asn). Reaction proceeds in two steps: L-aspartate is first activated by ATP to form Asp-AMP and then transferred to the acceptor end of tRNA(Asp/Asn). The chain is Aspartate--tRNA(Asp/Asn) ligase from Thermotoga maritima (strain ATCC 43589 / DSM 3109 / JCM 10099 / NBRC 100826 / MSB8).